We begin with the raw amino-acid sequence, 271 residues long: Putative cysteine protease YopT-like blr2140 (271 aa).

Positions 1-81 are disordered; sequence MYDRIGGSST…STSSPESPAT (81 aa). The span at 7 to 29 shows a compositional bias: polar residues; sequence GSSTRTSQTDEPSQSVDSGSFTE. The segment covering 65-81 has biased composition (low complexity); sequence TSSASEPSTSSPESPAT. The active site involves Cys100. Positions 114–136 are disordered; the sequence is SPSTRMSALTPGSQTHASAAERQ. Residues His213 and Asp228 contribute to the active site.

This sequence belongs to the peptidase C58 family.

In terms of biological role, potential cysteine protease, which may play a central role after invasion of host cell. The protein is Putative cysteine protease YopT-like blr2140 of Bradyrhizobium diazoefficiens (strain JCM 10833 / BCRC 13528 / IAM 13628 / NBRC 14792 / USDA 110).